We begin with the raw amino-acid sequence, 65 residues long: Large ribosomal subunit protein bL35 (65 aa).

This sequence belongs to the bacterial ribosomal protein bL35 family.

The chain is Large ribosomal subunit protein bL35 from Blochmanniella pennsylvanica (strain BPEN).